The primary structure comprises 114 residues: FK506-binding protein 1 (114 aa).

Ser2 carries the post-translational modification N-acetylserine. The PPIase FKBP-type domain occupies 26 to 114 (GDLVTIHYTG…VFDVELLKVN (89 aa)). Residue Ser51 is modified to Phosphoserine.

The protein belongs to the FKBP-type PPIase family. FKBP1 subfamily. In terms of assembly, interacts with HOM3; the interaction is direct, plays a role in feedback inhibition of aspartokinase by threonine, and is inhibited by tacrolimus and sirolimus. Interacts with HMO1. Interacts with FAP1.

The protein resides in the cytoplasm. It localises to the mitochondrion. It carries out the reaction [protein]-peptidylproline (omega=180) = [protein]-peptidylproline (omega=0). Functionally, PPIases accelerate the folding of proteins. It catalyzes the cis-trans isomerization of proline imidic peptide bonds in oligopeptides. Plays a role in feedback inhibition of the pathway synthesizing the aspartate family of amino acids by binding to aspartokinase. This Saccharomyces cerevisiae (strain ATCC 204508 / S288c) (Baker's yeast) protein is FK506-binding protein 1 (FPR1).